Here is a 72-residue protein sequence, read N- to C-terminus: Large ribosomal subunit protein uL29 (72 aa).

Belongs to the universal ribosomal protein uL29 family.

The chain is Large ribosomal subunit protein uL29 from Prochlorococcus marinus (strain MIT 9515).